The primary structure comprises 388 residues: MQFPAPLKSNSIKFLLLGSGELGKEVAIEAQRLGIEVVAVDRYPNAPAHLVAHRSYVIDMKSKEQVLEVIFREKPDYILPEIEAINIEALFEAEERGFRVIPNAEAVNKTMNRKNIRKFAAEELGLKTSQYRFVSSFEGLQEAARTLGFPCVIKPVMSSSGHGQSIARNEADLERSWEIAKEARGDASELIVEEFIDFDYEITLLTARNETGTVFCPPIGHIQKDGDYIFSWQPMQMSETALQKAKEIAKTITDGLGGRGIFGVELFVKGDEVYFSEVSPRPHDTGMVTMITQSQSEFALHVRAVLGLGLGFTFYTPGASAAYKAKHESFTPVIEADESVFDQESFLRVFGKPESHEGRRMAVVLTLAETAEQALQKANELIAKVSDQ.

N(1)-(5-phospho-beta-D-ribosyl)glycinamide contacts are provided by residues 21 to 22 (EL) and Glu-81. ATP-binding positions include Arg-113, Lys-154, 159-164 (SSGHGQ), 193-196 (EEFI), and Glu-201. Positions 118–306 (KFAAEELGLK…EFALHVRAVL (189 aa)) constitute an ATP-grasp domain. Residues Glu-265 and Glu-277 each coordinate Mg(2+). Residues Asp-284, Lys-352, and 359–360 (RR) contribute to the N(1)-(5-phospho-beta-D-ribosyl)glycinamide site.

This sequence belongs to the PurK/PurT family. In terms of assembly, homodimer.

The enzyme catalyses N(1)-(5-phospho-beta-D-ribosyl)glycinamide + formate + ATP = N(2)-formyl-N(1)-(5-phospho-beta-D-ribosyl)glycinamide + ADP + phosphate + H(+). It participates in purine metabolism; IMP biosynthesis via de novo pathway; N(2)-formyl-N(1)-(5-phospho-D-ribosyl)glycinamide from N(1)-(5-phospho-D-ribosyl)glycinamide (formate route): step 1/1. Its function is as follows. Involved in the de novo purine biosynthesis. Catalyzes the transfer of formate to 5-phospho-ribosyl-glycinamide (GAR), producing 5-phospho-ribosyl-N-formylglycinamide (FGAR). Formate is provided by PurU via hydrolysis of 10-formyl-tetrahydrofolate. This chain is Formate-dependent phosphoribosylglycinamide formyltransferase, found in Nitratiruptor sp. (strain SB155-2).